A 376-amino-acid chain; its full sequence is MLTAVCGSLGSQHTEAPHASPPRLDLQPLQTYQGHTSPEAGDYPSPLQPGELQSLPLGPEVDFSQGYELPGASSRVTCEDLESDSPLAPGPFSKLLQPDMSHHYESWFRPTHPGAEDGSWWDLHPGTSWMDLPHTQGALTSPGHPGALQAGLGGYVGDHQLCAPPPHPHAHHLLPAAGGQHLLGPPDGAKALEVAAPESQGLDSSLDGAARPKGSRRSVPRSSGQTVCRCPNCLEAERLGAPCGPDGGKKKHLHNCHIPGCGKAYAKTSHLKAHLRWHSGDRPFVCNWLFCGKRFTRSDELQRHLQTHTGTKKFPCAVCSRVFMRSDHLAKHMKTHEGAKEEAAGAASGEGKAGGAVEPPGGKGKREAEGSVAPSN.

Positions 1-70 (MLTAVCGSLG…VDFSQGYELP (70 aa)) are disordered. A 9aaTAD motif is present at residues 118–126 (GSWWDLHPG). The segment at 167-223 (HPHAHHLLPAAGGQHLLGPPDGAKALEVAAPESQGLDSSLDGAARPKGSRRSVPRSS) is disordered. The segment covering 173–186 (LLPAAGGQHLLGPP) has biased composition (low complexity). C2H2-type zinc fingers lie at residues 254-278 (HNCH…LRWH), 284-308 (FVCN…LQTH), and 314-336 (FPCA…MKTH). Positions 333-343 (MKTHEGAKEEA) are enriched in basic and acidic residues. The disordered stretch occupies residues 333 to 376 (MKTHEGAKEEAAGAASGEGKAGGAVEPPGGKGKREAEGSVAPSN).

Belongs to the Sp1 C2H2-type zinc-finger protein family. In terms of tissue distribution, ubiquitous.

The protein resides in the nucleus. In terms of biological role, promotes cell proliferation. Plays a role in tooth germ growth. Plays a role in the control of enamel mineralization. Binds the AMBN promoter. In Homo sapiens (Human), this protein is Transcription factor Sp6 (SP6).